Reading from the N-terminus, the 670-residue chain is ATP synthase subunit alpha 2 (670 aa).

ATP is bound at residue 180 to 187 (GDRATGKT). The segment at 527-670 (AEDAAGDIGG…DAEAEARHKR (144 aa)) is disordered. The segment covering 543 to 588 (ARGDADRDADHGANREVSREVSPEASREVSREVSREVSHEADRDAA) has biased composition (basic and acidic residues). Residues 589-599 (ADAARVAGRAP) are compositionally biased toward low complexity. Residues 621 to 639 (ADGDRASASRPRPDARGDA) show a composition bias toward basic and acidic residues. Positions 640-661 (ARTAPSPQGGAEVNVNAAANVD) are enriched in low complexity.

It belongs to the ATPase alpha/beta chains family. As to quaternary structure, F-type ATPases have 2 components, CF(1) - the catalytic core - and CF(0) - the membrane proton channel. CF(1) has five subunits: alpha(3), beta(3), gamma(1), delta(1), epsilon(1). CF(0) has three main subunits: a(1), b(2) and c(9-12). The alpha and beta chains form an alternating ring which encloses part of the gamma chain. CF(1) is attached to CF(0) by a central stalk formed by the gamma and epsilon chains, while a peripheral stalk is formed by the delta and b chains.

It is found in the cell inner membrane. It carries out the reaction ATP + H2O + 4 H(+)(in) = ADP + phosphate + 5 H(+)(out). Produces ATP from ADP in the presence of a proton gradient across the membrane. The alpha chain is a regulatory subunit. The sequence is that of ATP synthase subunit alpha 2 from Burkholderia pseudomallei (strain 668).